We begin with the raw amino-acid sequence, 513 residues long: Flagellin A (513 aa).

The protein belongs to the bacterial flagellin family. In terms of assembly, heteromer of FlaA and FlaB. FlaB is located proximal to the hook while the remainder of the filament is composed of the predominant FlaA.

Its subcellular location is the secreted. The protein resides in the bacterial flagellum. In terms of biological role, flagellin is the subunit protein which polymerizes to form the filaments of bacterial flagella. Important for motility and virulence. This is Flagellin A (flaA) from Helicobacter felis (strain ATCC 49179 / CCUG 28539 / NCTC 12436 / CS1).